The sequence spans 147 residues: uncharacterized protein (147 aa).

The next 4 helical transmembrane spans lie at 13–33 (LSLV…IIGL), 45–65 (LFVG…AYFL), 80–100 (YLFT…LILI), and 116–136 (WGFF…IIPY).

It localises to the cell membrane. This is an uncharacterized protein from Methanocaldococcus jannaschii (strain ATCC 43067 / DSM 2661 / JAL-1 / JCM 10045 / NBRC 100440) (Methanococcus jannaschii).